A 652-amino-acid chain; its full sequence is Acetyl-coenzyme A synthetase (652 aa).

Residues 191–194, threonine 311, and asparagine 335 each bind CoA; that span reads RAGR. ATP contacts are provided by residues 387–389, 411–416, aspartate 500, and arginine 515; these read GEP and DTWWQT. Serine 523 provides a ligand contact to CoA. ATP is bound at residue arginine 526. Valine 537, histidine 539, and isoleucine 542 together coordinate Mg(2+). Arginine 584 is a CoA binding site. N6-acetyllysine is present on lysine 609.

This sequence belongs to the ATP-dependent AMP-binding enzyme family. Mg(2+) is required as a cofactor. In terms of processing, acetylated. Deacetylation by the SIR2-homolog deacetylase activates the enzyme.

The catalysed reaction is acetate + ATP + CoA = acetyl-CoA + AMP + diphosphate. Catalyzes the conversion of acetate into acetyl-CoA (AcCoA), an essential intermediate at the junction of anabolic and catabolic pathways. Acs undergoes a two-step reaction. In the first half reaction, Acs combines acetate with ATP to form acetyl-adenylate (AcAMP) intermediate. In the second half reaction, it can then transfer the acetyl group from AcAMP to the sulfhydryl group of CoA, forming the product AcCoA. Functionally, enables the cell to use acetate during aerobic growth to generate energy via the TCA cycle, and biosynthetic compounds via the glyoxylate shunt. Acetylates CheY, the response regulator involved in flagellar movement and chemotaxis. This Citrobacter koseri (strain ATCC BAA-895 / CDC 4225-83 / SGSC4696) protein is Acetyl-coenzyme A synthetase.